The primary structure comprises 163 residues: ATP synthase subunit b', chloroplastic (163 aa).

Residues 26-46 form a helical membrane-spanning segment; the sequence is ATLPLMAVQILLFMVILNAVF.

This sequence belongs to the ATPase B chain family. As to quaternary structure, F-type ATPases have 2 components, F(1) - the catalytic core - and F(0) - the membrane proton channel. F(1) has five subunits: alpha(3), beta(3), gamma(1), delta(1), epsilon(1). F(0) has four main subunits: a(1), b(1), b'(1) and c(10-14). The alpha and beta chains form an alternating ring which encloses part of the gamma chain. F(1) is attached to F(0) by a central stalk formed by the gamma and epsilon chains, while a peripheral stalk is formed by the delta, b and b' chains.

It is found in the plastid. The protein resides in the chloroplast thylakoid membrane. F(1)F(0) ATP synthase produces ATP from ADP in the presence of a proton or sodium gradient. F-type ATPases consist of two structural domains, F(1) containing the extramembraneous catalytic core and F(0) containing the membrane proton channel, linked together by a central stalk and a peripheral stalk. During catalysis, ATP synthesis in the catalytic domain of F(1) is coupled via a rotary mechanism of the central stalk subunits to proton translocation. Functionally, component of the F(0) channel, it forms part of the peripheral stalk, linking F(1) to F(0). The b'-subunit is a diverged and duplicated form of b found in plants and photosynthetic bacteria. This Guillardia theta (Cryptophyte) protein is ATP synthase subunit b', chloroplastic.